Here is a 473-residue protein sequence, read N- to C-terminus: H(+)/Cl(-) exchange transporter ClcA (473 aa).

Residues 1 to 32 (MKTDTSTFLAQQIVRLRRRDQIRRLMQRDKTP) lie on the Cytoplasmic side of the membrane. Residues 33–69 (LAILFMAAVVGTLTGLVGVAFEKTVSWVQNMRIGALV) traverse the membrane as a helical segment. Residues 70–76 (QVADHAF) are Periplasmic-facing. Residues 77-100 (LLWPLAFILSALLAMVGYFLVRKF) form a helical membrane-spanning segment. A Selectivity filter part_1 motif is present at residues 106–110 (GSGIP). Ser-107 lines the chloride pocket. Positions 109–116 (IPEIEGAL) form an intramembrane region, helical. Over 117–123 (EELRPVR) the chain is Cytoplasmic. A run of 2 helical transmembrane segments spans residues 124–141 (WWRV…TLGA) and 148–166 (EGPT…LDVF). The Selectivity filter part_2 signature appears at 146–150 (GREGP). Topologically, residues 167 to 176 (RMRSAEARHT) are cytoplasmic. 2 intramembrane regions (helical) span residues 177–189 (LLAT…LSAA) and 193–201 (PLAGILFII). At 202–214 (EEMRPQFRYNLIS) the chain is on the cytoplasmic side. The chain crosses the membrane as a helical span at residues 215–232 (IKAVFTGVIMSSIVFRIF). The Periplasmic segment spans residues 233–252 (NGEAPIIEVGKLSDAPVNTL). Residues 253-281 (WLYLILGIIFGCVGPVFNSLVLRTQDMFQ) traverse the membrane as a helical segment. Over 282–287 (RFHGGE) the chain is Cytoplasmic. A helical transmembrane segment spans residues 288–309 (IKKWVLMGGAIGGLCGILGLIE). The Periplasmic segment spans residues 310–329 (PAAAGGGFNLIPIAAAGNFS). The next 2 membrane-spanning stretches (helical) occupy residues 330 to 349 (VGLL…LCFS) and 355 to 376 (GIFA…MAAA). The short motif at 355–359 (GIFAP) is the Selectivity filter part_3 element. Ile-356 and Phe-357 together coordinate chloride. Residues 377-386 (VLFPQYHPEA) lie on the Periplasmic side of the membrane. Positions 387-401 (GTFAIAGMGALMAAS) form an intramembrane region, helical. The note=Loop between two helices intramembrane region spans 402 to 404 (VRA). The helical intramembrane region spans 405 to 416 (PLTGIVLVLEMT). The segment at residues 417 to 421 (DNYQL) is an intramembrane region (note=Loop between two helices). The chain crosses the membrane as a helical span at residues 422–438 (ILPMIITCLGATLLAQF). Residues 439–473 (LGGKPLYSTILARTLAKQDAEQAAKNQNAPAGENT) are Cytoplasmic-facing. Tyr-445 serves as a coordination point for chloride.

It belongs to the chloride channel (TC 2.A.49) family. ClcA subfamily. In terms of assembly, homodimer.

The protein resides in the cell inner membrane. The catalysed reaction is 2 chloride(in) + H(+)(out) = 2 chloride(out) + H(+)(in). Its function is as follows. Proton-coupled chloride transporter. Functions as antiport system and exchanges two chloride ions for 1 proton. Probably acts as an electrical shunt for an outwardly-directed proton pump that is linked to amino acid decarboxylation, as part of the extreme acid resistance (XAR) response. The polypeptide is H(+)/Cl(-) exchange transporter ClcA (Salmonella paratyphi A (strain AKU_12601)).